A 341-amino-acid polypeptide reads, in one-letter code: Delta(1)-pyrroline-2-carboxylate reductase (341 aa).

The Charge relay system role is filled by serine 47. Histidine 48 acts as the Proton donor in catalysis. Substrate is bound at residue arginine 52. NADP(+) is bound at residue 120–124 (HFSAL). Threonine 160 contributes to the substrate binding site. 178–180 (DFA) contacts NADP(+). 186–187 (RG) contacts substrate. Glutamate 188 serves as the catalytic Charge relay system. Residues 229–230 (HK) and 305–311 (RLPSERR) each bind NADP(+).

The protein belongs to the LDH2/MDH2 oxidoreductase family. As to quaternary structure, homodimer.

It carries out the reaction L-proline + NAD(+) = 1-pyrroline-2-carboxylate + NADH + H(+). The enzyme catalyses L-proline + NADP(+) = 1-pyrroline-2-carboxylate + NADPH + H(+). Its function is as follows. Catalyzes the reduction of Delta(1)-pyrroline-2-carboxylate (Pyr2C) to L-proline, using NADPH as the electron donor. Is likely involved in a degradation pathway that converts cis- and trans-3-hydroxy-L-proline (c3LHyp and t3LHyp) to L-proline, which would allow S.novella to grow on c3LHyp or t3LHyp as a sole carbon source. The protein is Delta(1)-pyrroline-2-carboxylate reductase of Ancylobacter novellus (strain ATCC 8093 / DSM 506 / JCM 20403 / CCM 1077 / IAM 12100 / NBRC 12443 / NCIMB 10456) (Starkeya novella).